The primary structure comprises 696 residues: Elongation factor G (696 aa).

One can recognise a tr-type G domain in the interval 8–286 (EDVRNIGIAA…AVVHYLPSPV (279 aa)). Residues 17 to 24 (AHIDAGKT), 81 to 85 (DTPGH), and 135 to 138 (NKMD) each bind GTP.

Belongs to the TRAFAC class translation factor GTPase superfamily. Classic translation factor GTPase family. EF-G/EF-2 subfamily.

It localises to the cytoplasm. Catalyzes the GTP-dependent ribosomal translocation step during translation elongation. During this step, the ribosome changes from the pre-translocational (PRE) to the post-translocational (POST) state as the newly formed A-site-bound peptidyl-tRNA and P-site-bound deacylated tRNA move to the P and E sites, respectively. Catalyzes the coordinated movement of the two tRNA molecules, the mRNA and conformational changes in the ribosome. This is Elongation factor G from Sulfurovum sp. (strain NBC37-1).